A 139-amino-acid polypeptide reads, in one-letter code: Large-conductance mechanosensitive channel (139 aa).

The next 2 helical transmembrane spans lie at 9 to 29 (AFAV…GAAF) and 79 to 99 (IQTV…VKAI).

It belongs to the MscL family. As to quaternary structure, homopentamer.

The protein resides in the cell inner membrane. Functionally, channel that opens in response to stretch forces in the membrane lipid bilayer. May participate in the regulation of osmotic pressure changes within the cell. This Pseudomonas putida (strain W619) protein is Large-conductance mechanosensitive channel.